The sequence spans 379 residues: Heme chaperone HemW (379 aa).

The region spanning 1 to 232 is the Radical SAM core domain; the sequence is MLQKPNSAYF…MDILAKNGYN (232 aa). Tyrosine 9 provides a ligand contact to S-adenosyl-L-methionine. 3 residues coordinate [4Fe-4S] cluster: cysteine 15, cysteine 19, and cysteine 22. Residues glycine 60, 61–62, glutamate 93, glutamine 120, arginine 132, and aspartate 157 contribute to the S-adenosyl-L-methionine site; that span reads GT.

This sequence belongs to the anaerobic coproporphyrinogen-III oxidase family. HemW subfamily. As to quaternary structure, homodimer.

The protein resides in the cytoplasm. Its subcellular location is the cell membrane. Could serve in the delivery of heme to a membrane-localized target protein. Binds one molecule of heme per monomer, possibly covalently; heme and Fe-S cluster binding are independent. Incubation with the reductant sodium dithionite increases binding. Does not have coproporphyrinogen III dehydrogenase activity in vitro, does not complement an E.coli hemN deletion in vivo. Binds 1 Fe-S cluster, it is probably [4Fe-4S]. The cluster is coordinated with 3 cysteines and an exchangeable S-adenosyl-L-methionine; only dimeric protein has the cluster. In Lactococcus lactis subsp. lactis (strain IL1403) (Streptococcus lactis), this protein is Heme chaperone HemW.